Consider the following 908-residue polypeptide: Metabotropic glutamate receptor 8 (908 aa).

An N-terminal signal peptide occupies residues 1-33 (MVCEGKRLASCPCFFLLTAKFYWILTMMQRTHS). At 34–583 (QEYAHSIRVD…IIKLEWHSPW (550 aa)) the chain is on the extracellular side. A disulfide bridge links Cys-64 with Cys-106. Asn-95 carries N-linked (GlcNAc...) asparagine glycosylation. L-glutamate contacts are provided by residues Ser-156, 177–179 (AST), and Tyr-227. 7 cysteine pairs are disulfide-bonded: Cys-246–Cys-534, Cys-369–Cys-384, Cys-424–Cys-431, Cys-516–Cys-535, Cys-520–Cys-538, Cys-541–Cys-553, and Cys-556–Cys-569. An N-linked (GlcNAc...) asparagine glycan is attached at Asn-298. Asp-309 lines the L-glutamate pocket. Residue Lys-401 coordinates L-glutamate. N-linked (GlcNAc...) asparagine glycans are attached at residues Asn-452 and Asn-480. A glycan (N-linked (GlcNAc...) asparagine) is linked at Asn-565. Residues 584–608 (AVVPVFIAILGIIATTFVIVTFVRY) traverse the membrane as a helical segment. The Cytoplasmic portion of the chain corresponds to 609–620 (NDTPIVRASGRE). The helical transmembrane segment at 621–641 (LSYVLLTGIFLCYSITFLMIA) threads the bilayer. Residues 642–647 (APDTII) are Extracellular-facing. Residues 648–668 (CSFRRIFLGLGMCFSYAALLT) traverse the membrane as a helical segment. Residues 669–695 (KTNRIHRIFEQGKKSVTAPKFISPASQ) lie on the Cytoplasmic side of the membrane. Residues 696–716 (LVITFSLISVQLLGVFVWFVV) form a helical membrane-spanning segment. Residues 717 to 746 (DPPHTIIDYGEQRTLDPENARGVLKCDISD) are Extracellular-facing. A helical transmembrane segment spans residues 747–768 (LSLICSLGYSILLMVTCTVYAI). Topologically, residues 769–781 (KTRGVPETFNEAK) are cytoplasmic. Residues 782–803 (PIGFTMYTTCIIWLAFIPIFFG) traverse the membrane as a helical segment. Topologically, residues 804–818 (TAQSAEKMYIQTTTL) are extracellular. A helical transmembrane segment spans residues 819–843 (TVSMSLSASVSLGMLYMPKVYIIIF). Residues 844 to 908 (HPEQNVQKRK…TYISYSNHSI (65 aa)) lie on the Cytoplasmic side of the membrane. Lys-882 participates in a covalent cross-link: Glycyl lysine isopeptide (Lys-Gly) (interchain with G-Cter in SUMO1).

It belongs to the G-protein coupled receptor 3 family. As to quaternary structure, interacts with PICK1. Prominent expression in olfactory bulb, pontine gray, lateral reticular nucleus of the thalamus, and piriform cortex. Less abundant expression incerebral cortex, hippocampus, cerebellum, and mammillary body.

Its subcellular location is the cell membrane. In terms of biological role, G-protein coupled receptor for glutamate. Ligand binding causes a conformation change that triggers signaling via guanine nucleotide-binding proteins (G proteins) and modulates the activity of down-stream effectors. Signaling inhibits adenylate cyclase activity. The sequence is that of Metabotropic glutamate receptor 8 (Grm8) from Rattus norvegicus (Rat).